The sequence spans 435 residues: Diaminobutyrate--2-oxoglutarate transaminase (435 aa).

Lys-266 is subject to N6-(pyridoxal phosphate)lysine.

The protein belongs to the class-III pyridoxal-phosphate-dependent aminotransferase family. Pyridoxal 5'-phosphate is required as a cofactor.

It catalyses the reaction L-2,4-diaminobutanoate + 2-oxoglutarate = L-aspartate 4-semialdehyde + L-glutamate. It functions in the pathway amine and polyamine biosynthesis; ectoine biosynthesis; L-ectoine from L-aspartate 4-semialdehyde: step 1/3. Functionally, catalyzes reversively the conversion of L-aspartate beta-semialdehyde (ASA) to L-2,4-diaminobutyrate (DABA) by transamination with L-glutamate. The chain is Diaminobutyrate--2-oxoglutarate transaminase (ectB) from Bordetella bronchiseptica (strain ATCC BAA-588 / NCTC 13252 / RB50) (Alcaligenes bronchisepticus).